A 143-amino-acid chain; its full sequence is Transcriptional regulator MraZ (143 aa).

SpoVT-AbrB domains lie at 5–47 (EYRH…PQVE) and 76–119 (ATEC…SKEL).

The protein belongs to the MraZ family. In terms of assembly, forms oligomers.

Its subcellular location is the cytoplasm. It localises to the nucleoid. The chain is Transcriptional regulator MraZ from Halalkalibacterium halodurans (strain ATCC BAA-125 / DSM 18197 / FERM 7344 / JCM 9153 / C-125) (Bacillus halodurans).